A 201-amino-acid polypeptide reads, in one-letter code: FMN-dependent NADH:quinone oxidoreductase (201 aa).

An FMN-binding site is contributed by 92–95 (MWNL).

This sequence belongs to the azoreductase type 1 family. In terms of assembly, homodimer. FMN is required as a cofactor.

The catalysed reaction is 2 a quinone + NADH + H(+) = 2 a 1,4-benzosemiquinone + NAD(+). It carries out the reaction N,N-dimethyl-1,4-phenylenediamine + anthranilate + 2 NAD(+) = 2-(4-dimethylaminophenyl)diazenylbenzoate + 2 NADH + 2 H(+). Functionally, quinone reductase that provides resistance to thiol-specific stress caused by electrophilic quinones. Its function is as follows. Also exhibits azoreductase activity. Catalyzes the reductive cleavage of the azo bond in aromatic azo compounds to the corresponding amines. In Caldicellulosiruptor bescii (strain ATCC BAA-1888 / DSM 6725 / KCTC 15123 / Z-1320) (Anaerocellum thermophilum), this protein is FMN-dependent NADH:quinone oxidoreductase.